The following is a 461-amino-acid chain: Argininosuccinate lyase (461 aa).

Belongs to the lyase 1 family. Argininosuccinate lyase subfamily.

Its subcellular location is the cytoplasm. It catalyses the reaction 2-(N(omega)-L-arginino)succinate = fumarate + L-arginine. It functions in the pathway amino-acid biosynthesis; L-arginine biosynthesis; L-arginine from L-ornithine and carbamoyl phosphate: step 3/3. The sequence is that of Argininosuccinate lyase from Streptococcus thermophilus (strain CNRZ 1066).